The primary structure comprises 271 residues: Phosphatidylinositol transfer protein alpha isoform (271 aa).

6 residues coordinate a 1,2-diacyl-sn-glycero-3-phospho-(1D-myo-inositol): threonine 59, lysine 61, glutamate 86, asparagine 90, threonine 97, and lysine 195. Lysine 216 is subject to N6-acetyllysine. The segment covering 251–264 (TKRQLDEMRQKDPV) has biased composition (basic and acidic residues). A disordered region spans residues 251-271 (TKRQLDEMRQKDPVKGMTADD).

This sequence belongs to the PtdIns transfer protein family. PI transfer class I subfamily. Phosphorylated by PKC in a calcium and phosphatidylserine-dependent manner. As to expression, expressed in a wide range of tissues.

Its subcellular location is the cytoplasm. It localises to the nucleus. The enzyme catalyses a 1,2-diacyl-sn-glycero-3-phosphocholine(in) = a 1,2-diacyl-sn-glycero-3-phosphocholine(out). It catalyses the reaction a 1,2-diacyl-sn-glycero-3-phospho-(1D-myo-inositol)(in) = a 1,2-diacyl-sn-glycero-3-phospho-(1D-myo-inositol)(out). Phosphatidylinositol transfer activity is inhibited by N-ethylmaleimide. Its function is as follows. Catalyzes the transfer of phosphatidylinositol (PI) and phosphatidylcholine (PC) between membranes. Shows a preference for PI and PC containing shorter saturated or monosaturated acyl chains at the sn-1 and sn-2 positions. Preference order for PC is C16:1 &gt; C16:0 &gt; C18:1 &gt; C18:0 &gt; C20:4 and for PI is C16:1 &gt; C16:0 &gt; C18:1 &gt; C18:0 &gt; C20:4 &gt; C20:3. The chain is Phosphatidylinositol transfer protein alpha isoform (Pitpna) from Rattus norvegicus (Rat).